A 640-amino-acid chain; its full sequence is Threonine--tRNA ligase (640 aa).

A TGS domain is found at 1 to 61 (MPIITLPNGD…TEDSTLQIIT (61 aa)). The catalytic stretch occupies residues 242–533 (DHRKIGKALD…LIEHYAGFMP (292 aa)). The Zn(2+) site is built by cysteine 333, histidine 384, and histidine 510.

Belongs to the class-II aminoacyl-tRNA synthetase family. In terms of assembly, homodimer. Requires Zn(2+) as cofactor.

It is found in the cytoplasm. The enzyme catalyses tRNA(Thr) + L-threonine + ATP = L-threonyl-tRNA(Thr) + AMP + diphosphate + H(+). In terms of biological role, catalyzes the attachment of threonine to tRNA(Thr) in a two-step reaction: L-threonine is first activated by ATP to form Thr-AMP and then transferred to the acceptor end of tRNA(Thr). Also edits incorrectly charged L-seryl-tRNA(Thr). This chain is Threonine--tRNA ligase, found in Acinetobacter baumannii (strain AB0057).